The sequence spans 94 residues: Large ribosomal subunit protein uL23cz (94 aa).

Belongs to the universal ribosomal protein uL23 family. In terms of assembly, part of the 50S ribosomal subunit.

It localises to the plastid. The protein resides in the chloroplast. Functionally, binds to 23S rRNA. This is Large ribosomal subunit protein uL23cz (rpl23-A) from Agrostis stolonifera (Creeping bentgrass).